Here is a 99-residue protein sequence, read N- to C-terminus: Integration host factor subunit alpha (99 aa).

The segment at 49–70 (FGNFDLRDKNQRPGRNPKTGED) is disordered.

It belongs to the bacterial histone-like protein family. Heterodimer of an alpha and a beta chain.

Functionally, this protein is one of the two subunits of integration host factor, a specific DNA-binding protein that functions in genetic recombination as well as in transcriptional and translational control. The protein is Integration host factor subunit alpha of Cronobacter sakazakii (strain ATCC BAA-894) (Enterobacter sakazakii).